Reading from the N-terminus, the 232-residue chain is Uracil-DNA glycosylase (232 aa).

D70 functions as the Proton acceptor in the catalytic mechanism.

It belongs to the uracil-DNA glycosylase (UDG) superfamily. UNG family.

The protein localises to the cytoplasm. It carries out the reaction Hydrolyzes single-stranded DNA or mismatched double-stranded DNA and polynucleotides, releasing free uracil.. Excises uracil residues from the DNA which can arise as a result of misincorporation of dUMP residues by DNA polymerase or due to deamination of cytosine. In Campylobacter fetus subsp. fetus (strain 82-40), this protein is Uracil-DNA glycosylase.